An 840-amino-acid chain; its full sequence is 9-beta-pimara-7,15-diene synthase, chloroplastic (840 aa).

A chloroplast-targeting transit peptide spans 1–56 (MASPMEAVARSSLVLAPRRRRALGLLPAAAAPFVLDCRRRHNGGMRRPHVSFACSA). The Mg(2+) site is built by Asp589, Asp593, Asn733, Ser737, and Glu741. The DDXXD motif motif lies at 589 to 593 (DDFFD).

This sequence belongs to the terpene synthase family. It depends on Mg(2+) as a cofactor.

It localises to the plastid. It is found in the chloroplast. The catalysed reaction is 9alpha-copalyl diphosphate = 9beta-pimara-7,15-diene + diphosphate. Its function is as follows. Involved in the biosynthesis of momilactone A and B phytoalexins. Catalyzes the conversion of syn-copalyl diphosphate to the phytoalexin precursor syn-pimara-7,15-diene. The sequence is that of 9-beta-pimara-7,15-diene synthase, chloroplastic from Oryza sativa subsp. indica (Rice).